The sequence spans 158 residues: C-type lectin BfL-1 (158 aa).

An N-terminal signal peptide occupies residues 1-21 (MGHFTFIGLCLLAMFLSLSGA). 4 disulfide bridges follow: Cys26-Cys37, Cys54-Cys154, Cys61-Cys156, and Cys129-Cys146. A C-type lectin domain is found at 33 to 155 (KNGLCYKVFS…CAALRPFLCQ (123 aa)). Ca(2+)-binding residues include Gln119, Asp121, and Glu127. A Galactose-binding motif is present at residues 119–121 (QPD). The N-linked (GlcNAc...) asparagine glycan is linked to Asn134. 2 residues coordinate Ca(2+): Asn142 and Asp143.

Belongs to the true venom lectin family. In terms of assembly, homodimer; non-covalently linked. Expressed by the venom gland.

The protein resides in the secreted. In terms of biological role, galactose-binding lectin which recognizes specific carbohydrate structures and agglutinates a variety of animal cells by binding to cell-surface glycoproteins and glycolipids. May be a calcium-dependent lectin. This is C-type lectin BfL-1 from Bungarus fasciatus (Banded krait).